Here is a 479-residue protein sequence, read N- to C-terminus: Isoprimeverose transporter (479 aa).

11 consecutive transmembrane segments (helical) span residues 54–74 (MFFYTDVFGISAAIVGTLFLV), 102–122 (PYWLWFAIPFAVFSVLCFTVP), 131–151 (VWAYVTYIGVDVLYSAVNIPI), 174–194 (FMGTLGATIISTIALPLVAYF), 205–225 (WFMVALIMAVIAMVIFFIVFA), 253–273 (WPWVIVIFINFIYWLGMQTRS), 289–309 (LASFILGLQLVALLAVVITPW), 321–341 (LMGMLLAIVGQLILWGGSKAL), 348–368 (VGTIVGYLGTGFVSGLIAVML), 397–417 (FGMGIGGAVTGLILSAGGYVA), and 431–451 (MNYVWVPIVGFGLSAIALLFY).

This sequence belongs to the sodium:galactoside symporter (TC 2.A.2) family.

The protein resides in the cell membrane. In terms of biological role, involved in the metabolism of isoprimeverose. Transports isoprimeverose into the cell. Transport is driven by the proton motive force generated by malolactic fermentation. Cannot transport D-xylose. This chain is Isoprimeverose transporter, found in Lactiplantibacillus pentosus (Lactobacillus pentosus).